The following is a 453-amino-acid chain: Chromosomal replication initiator protein DnaA (453 aa).

The domain I, interacts with DnaA modulators stretch occupies residues 1 to 74 (MKEKQFWNRI…GFEIYDAEIT (74 aa)). Residues 74 to 113 (TPHYIFTKPQDTTSSQVEEATNLTLYDYSPKLVSIPYSDT) are domain II. The segment at 114-331 (GLKEKYTFDN…GAINDITLIA (218 aa)) is domain III, AAA+ region. Residues Gly158, Gly160, Lys161, and Thr162 each contribute to the ATP site. The segment at 332–453 (RVKKIKDITI…EIESIKKKIK (122 aa)) is domain IV, binds dsDNA.

It belongs to the DnaA family. Oligomerizes as a right-handed, spiral filament on DNA at oriC.

It is found in the cytoplasm. Functionally, plays an essential role in the initiation and regulation of chromosomal replication. ATP-DnaA binds to the origin of replication (oriC) to initiate formation of the DNA replication initiation complex once per cell cycle. Binds the DnaA box (a 9 base pair repeat at the origin) and separates the double-stranded (ds)DNA. Forms a right-handed helical filament on oriC DNA; dsDNA binds to the exterior of the filament while single-stranded (ss)DNA is stabiized in the filament's interior. The ATP-DnaA-oriC complex binds and stabilizes one strand of the AT-rich DNA unwinding element (DUE), permitting loading of DNA polymerase. After initiation quickly degrades to an ADP-DnaA complex that is not apt for DNA replication. Binds acidic phospholipids. The sequence is that of Chromosomal replication initiator protein DnaA from Streptococcus pneumoniae (strain Taiwan19F-14).